Here is a 567-residue protein sequence, read N- to C-terminus: Urease subunit alpha (567 aa).

One can recognise a Urease domain in the interval 128-567 (GGIDAHVHFI…LPMSQRYFLF (440 aa)). H133, H135, and K216 together coordinate Ni(2+). K216 is subject to N6-carboxylysine. H218 is a substrate binding site. Positions 245 and 271 each coordinate Ni(2+). H319 serves as the catalytic Proton donor. Residue D359 coordinates Ni(2+).

It belongs to the metallo-dependent hydrolases superfamily. Urease alpha subunit family. Heterotrimer of UreA (gamma), UreB (beta) and UreC (alpha) subunits. Three heterotrimers associate to form the active enzyme. Ni cation serves as cofactor. In terms of processing, carboxylation allows a single lysine to coordinate two nickel ions.

It is found in the cytoplasm. It catalyses the reaction urea + 2 H2O + H(+) = hydrogencarbonate + 2 NH4(+). It participates in nitrogen metabolism; urea degradation; CO(2) and NH(3) from urea (urease route): step 1/1. This Blochmanniella pennsylvanica (strain BPEN) protein is Urease subunit alpha.